The chain runs to 359 residues: Lachesin (359 aa).

The first 25 residues, 1-25, serve as a signal peptide directing secretion; it reads MWRPSISNCVWSTLLLAIFVQQTLA. An Ig-like V-type domain is found at 29–130; that stretch reads PTISYITQEQ…HKVSAEVKLS (102 aa). An intrachain disulfide couples Cys-50 to Cys-113. N-linked (GlcNAc...) asparagine glycosylation is found at Asn-92 and Asn-140. Ig-like C2-type domains are found at residues 135–221 and 226–317; these read PVIS…INVE and PVIT…ARVN. 2 disulfides stabilise this stretch: Cys-157–Cys-204 and Cys-247–Cys-303. Ala-336 is lipidated: GPI-anchor amidated alanine. Residues 337 to 359 constitute a propeptide, removed in mature form; the sequence is GAEDVSATSFALVGILAALLFAR.

As to expression, expressed on differentiating neuronal cells from the onset of neurogenesis in both the central and peripheral nervous systems. First detected in the cellularized blastoderm, apart from in the ventral side. Expression persists uniformly in the early ectoderm until the end of gastrulation. From stage 10, expressed in an alternating strong/weak pattern in each segment until stage 15 when it disappears. From stage 11, expressed in subsets of neurons and later subsets of glial cells. From early stage 13, strongly expressed in trachea, hindgut, foregut and the nervous system.

It is found in the cell membrane. Required for normal tracheal development and maintenance of the trans-epithelial diffusion barrier. Functions as a homophilic cell-adhesion molecule. May play a role in early neuronal differentiation and axon outgrowth. In Drosophila melanogaster (Fruit fly), this protein is Lachesin (Lac).